The following is a 906-amino-acid chain: MADENQEIGGIHFPFPFPPYPIQKDFMAELYKVLEGGKIGIFESPTGTGKSLSLICGALSWLRDFEKKKLQAEALLLAPGSGPPSSEKNSLLTSSSCQEPTDTPRPAGEPDWVTEFVQKKEERDLVERLREEQVRRRKREERLKEVCQDGRLRFAAKRTKHEEEETEALLRLSREMLDAGTGPEQLEQLECGEEHLVLAEYESDEERRGSRVDEAEDDLEEEHITKIYYCSRTHSQLAQFVREVLKSPFGKETRLVSLGSRQTLCVNEDVKNLGSVQLMNDRCVDMQRSKREKNGTGEDKPKRKRQKIQTSCPFYNHEQMELLRDEILLEVKDMEQLVALGKEARACPYYGSRFAIPAAQLVVLPYPMLLHAATRQAAGIRLQGQVVIIDEAHNLIDTITNIHSTEVNGSQLCQAHSQLLQYMERYRKRLKAKNLMYIKQILYLLEKFVAVLGGNVKQNPTTQSLSQTGSELKSINDFLFQSQVDNINLFKVQRYLEKSMLSRKLFGFTECFGVVLPSLSDSQENRGLAGFQQFLKSLQSGPTEDSPEEGQAVALRPASPLMHIEAFLAALTTANQDGRVIVNRQGSVGQSSLKFLLLNPAVHFAQVVKECRAVVIAGGTMQPMSDFREQLLACSGVEAGRVVEFSCGHVIPPDNILPLIICSGPSNQQLEFTYQRRELPQMVEETGRILCNLCNVVPGGVVCFLPSYEYLRQVHAHWDKTGLLTRLSVRKKIFQEPKRASQVEQVLMAYSKCIMSCSHSEGHLTGALLLSVVGGKMSEGINFSDDLGRCVVMVGMPYPNIKSPELQEKMAYLNQTLPRTQGQPLPGTVLIENLCMKAINQSIGRAIRHQRDFASIVLLDHRYARPSILAKLPAWIRDRVEVKATFGPAFAAVRKFHREKSHPSLV.

Residues 9-442 enclose the Helicase ATP-binding domain; the sequence is GGIHFPFPFP…KNLMYIKQIL (434 aa). An ATP-binding site is contributed by 44–51; the sequence is SPTGTGKS. Residues 78–111 form a disordered region; that stretch reads APGSGPPSSEKNSLLTSSSCQEPTDTPRPAGEPD. Residues 85-96 are compositionally biased toward low complexity; the sequence is SSEKNSLLTSSS. Phosphoserine is present on Ser260. Positions 265 and 283 each coordinate [4Fe-4S] cluster. The segment covering 284-301 has biased composition (basic and acidic residues); it reads VDMQRSKREKNGTGEDKP. Positions 284–310 are disordered; it reads VDMQRSKREKNGTGEDKPKRKRQKIQT. [4Fe-4S] cluster contacts are provided by Cys312 and Cys347. Positions 390–393 match the DEAH box motif; sequence DEAH.

The protein belongs to the DEAD box helicase family. DEAH subfamily. DDX11/CHL1 sub-subfamily. Associates with the CTF18-RFC complex. Associates with a cohesin complex composed of RAD21, SMC1 proteins and SMC3. Interacts with CHTF18. Interacts with DSCC1. Interacts with FEN1; this interaction is direct and increases flap endonuclease activity of FEN1. Interacts with PCNA. Interacts with POLR1A and UBTF. Interacts with RAD21, SMC1 proteins and SMC3. Interacts with RFC2. Interacts with TIMELESS; this interaction increases recruitment of both proteins onto chromatin in response to replication stress induction by hydroxyurea. [4Fe-4S] cluster serves as cofactor.

Its subcellular location is the nucleus. It localises to the nucleolus. The protein resides in the cytoplasm. The protein localises to the cytoskeleton. It is found in the spindle pole. Its subcellular location is the midbody. It localises to the microtubule organizing center. The protein resides in the centrosome. It carries out the reaction Couples ATP hydrolysis with the unwinding of duplex DNA at the replication fork by translocating in the 5'-3' direction. This creates two antiparallel DNA single strands (ssDNA). The leading ssDNA polymer is the template for DNA polymerase III holoenzyme which synthesizes a continuous strand.. It catalyses the reaction ATP + H2O = ADP + phosphate + H(+). DNA-dependent ATPase and ATP-dependent DNA helicase that participates in various functions in genomic stability, including DNA replication, DNA repair and heterochromatin organization as well as in ribosomal RNA synthesis. Its double-stranded DNA helicase activity requires either a minimal 5'-single-stranded tail length of approximately 15 nt (flap substrates) or 10 nt length single-stranded gapped DNA substrates of a partial duplex DNA structure for helicase loading and translocation along DNA in a 5' to 3' direction. The helicase activity is capable of displacing duplex regions up to 100 bp, which can be extended up to 500 bp by the replication protein A (RPA) or the cohesion CTF18-replication factor C (Ctf18-RFC) complex activities. Also shows ATPase- and helicase activities on substrates that mimic key DNA intermediates of replication, repair and homologous recombination reactions, including forked duplex, anti-parallel G-quadruplex and three-stranded D-loop DNA molecules. Plays a role in DNA double-strand break (DSB) repair at the DNA replication fork during DNA replication recovery from DNA damage. Recruited with TIMELESS factor upon DNA-replication stress response at DNA replication fork to preserve replication fork progression, and hence ensure DNA replication fidelity. Also cooperates with TIMELESS factor during DNA replication to regulate proper sister chromatid cohesion and mitotic chromosome segregation. Stimulates 5'-single-stranded DNA flap endonuclease activity of FEN1 in an ATP- and helicase-independent manner; and hence it may contribute in Okazaki fragment processing at DNA replication fork during lagging strand DNA synthesis. Its ability to function at DNA replication fork is modulated by its binding to long non-coding RNA (lncRNA) cohesion regulator non-coding RNA DDX11-AS1/CONCR, which is able to increase both DDX11 ATPase activity and binding to DNA replicating regions. Also plays a role in heterochromatin organization. Involved in rRNA transcription activation through binding to active hypomethylated rDNA gene loci by recruiting UBTF and the RNA polymerase Pol I transcriptional machinery. Plays a role in embryonic development and prevention of aneuploidy. Involved in melanoma cell proliferation and survival. Associates with chromatin at DNA replication fork regions. Binds to single- and double-stranded DNAs. This Mus musculus (Mouse) protein is ATP-dependent DNA helicase DDX11.